We begin with the raw amino-acid sequence, 1639 residues long: Mediator of RNA polymerase II transcription subunit 14 (1639 aa).

The short motif at 49 to 53 (LAELL) is the LXXLL motif 1 element. 2 disordered regions span residues 561–586 (GQSP…GSDS) and 709–755 (LPQP…KTVH). Residues 575-586 (SAAGGPAPGSDS) show a composition bias toward low complexity. A compositionally biased stretch (pro residues) spans 711-721 (QPKPPQAPPTP). The segment covering 722–748 (QQQQQQQQQQQQPGTSDAKSSGAGASA) has biased composition (low complexity). The LXXLL motif 2 motif lies at 768–772 (LKRLL). Disordered regions lie at residues 1039-1243 (RRSQ…HHYT) and 1558-1639 (MQPG…GGPN). Gly residues-rich tracts occupy residues 1062 to 1088 (GNNG…GTGM) and 1122 to 1142 (IGGG…GQGG). Residues 1189 to 1201 (GPSSLSYMQSHTD) show a composition bias toward polar residues. Residues 1219 to 1229 (PGMPRPSPRPG) are compositionally biased toward pro residues. The segment covering 1558 to 1579 (MQPGGGPGVPGGPGGPMGGQIG) has biased composition (gly residues). Residues 1589–1603 (VGSSPSPMMHSPMQQ) show a composition bias toward low complexity. The segment covering 1604–1639 (MGGGGPQPGAYGGMVGGPGGGPQSGGPVGGGPGGPN) has biased composition (gly residues).

Belongs to the Mediator complex subunit 14 family. Component of the Mediator complex.

Its subcellular location is the nucleus. In terms of biological role, component of the Mediator complex, a coactivator involved in the regulated transcription of nearly all RNA polymerase II-dependent genes. Mediator functions as a bridge to convey information from gene-specific regulatory proteins to the basal RNA polymerase II transcription machinery. Mediator is recruited to promoters by direct interactions with regulatory proteins and serves as a scaffold for the assembly of a functional preinitiation complex with RNA polymerase II and the general transcription factors. This Anopheles gambiae (African malaria mosquito) protein is Mediator of RNA polymerase II transcription subunit 14 (MED14).